Reading from the N-terminus, the 230-residue chain is Large ribosomal subunit protein uL1 (230 aa).

This sequence belongs to the universal ribosomal protein uL1 family. Part of the 50S ribosomal subunit.

In terms of biological role, binds directly to 23S rRNA. The L1 stalk is quite mobile in the ribosome, and is involved in E site tRNA release. Its function is as follows. Protein L1 is also a translational repressor protein, it controls the translation of the L11 operon by binding to its mRNA. In Metamycoplasma arthritidis (strain 158L3-1) (Mycoplasma arthritidis), this protein is Large ribosomal subunit protein uL1.